We begin with the raw amino-acid sequence, 216 residues long: DDB1- and CUL4-associated factor 16 (216 aa).

The tract at residues 1 to 42 is disordered; the sequence is MGPRNPSPDHLSESESEEEENISYLNESSGEEWDSSEEEDSM. Over residues 29–41 the composition is skewed to acidic residues; it reads SGEEWDSSEEEDS. K61 carries the post-translational modification N6-acetyllysine.

In terms of assembly, interacts with DDB1 and CUL4A.

Its subcellular location is the nucleus. It participates in protein modification; protein ubiquitination. Its function is as follows. Functions as a substrate recognition component for CUL4-DDB1 E3 ubiquitin-protein ligase complex, which mediates ubiquitination and proteasome-dependent degradation of nuclear proteins. In Homo sapiens (Human), this protein is DDB1- and CUL4-associated factor 16.